A 210-amino-acid polypeptide reads, in one-letter code: Large ribosomal subunit protein uL3 (210 aa).

Residues 121-150 are disordered; that stretch reads GGIKRHGFHRGPMAHGSKYHRRPGSLGAKG.

Belongs to the universal ribosomal protein uL3 family. As to quaternary structure, part of the 50S ribosomal subunit. Forms a cluster with proteins L14 and L19.

In terms of biological role, one of the primary rRNA binding proteins, it binds directly near the 3'-end of the 23S rRNA, where it nucleates assembly of the 50S subunit. This chain is Large ribosomal subunit protein uL3, found in Pelotomaculum thermopropionicum (strain DSM 13744 / JCM 10971 / SI).